An 83-amino-acid chain; its full sequence is Probable calcium-binding protein CML29 (83 aa).

EF-hand domains lie at 5–40 (TEKA…LGSV) and 43–75 (DDVK…NRGL). Asp18, Asn20, Asp22, Lys24, Glu29, Asp53, Asp55, Asp57, Asn59, and Glu64 together coordinate Ca(2+).

Functionally, potential calcium sensor. The protein is Probable calcium-binding protein CML29 (CML29) of Arabidopsis thaliana (Mouse-ear cress).